A 1969-amino-acid polypeptide reads, in one-letter code: MSGNPDAFENDPGFPFLGISREARAATAARPFDSKKNCWIPDPEDGFVAAEIQSTTGEQVTVVTVKGNQITVKKDQCQEMNPPKFDKTEDMANLTFLNEASVLGNLKDRYKDLMIYTYSGLFCVVINPYKRLPIYSESVIKHFMGKRRNEMPPHLFAVSDEAYRNMVQDKENQSMLITGESGAGKTENTKKVISYFAIVGATQAASGKEAKDGKKGGTLEEQIVQTNPVLEAFGNAKTVRNNNSSRFGKFIRTHFSGSGKLAGGDIEHYLLEKSRVVRQAPGERCYHIFYQIMSGNDPSLRGKLKLSNDITYYHFCSQAELTIEGMDDKEEMRLTQEAFDIMGFEDNETMDLYRSTAGIMHMGEMKFKQRPREEQAEPDGEEDALNAAAMLGIQAEEFLKALTKPRVRVGTEWVNKGQNLEQVNWAVSGLAKAIYARMFKWIITRCNKTLDAKEIERKHFIGVLDIAGFEIFDLNSFEQLWINFVNERLQQFFNHHMFVLEQEEYKREGIAWTFIDFGLDLQACIELIEKPLGIISILDEECIVPKATDMTYAQKLLDQHLGKHPNFQKPKPPKGKQGDAHFAIVHYAGTVRYNATNFLEKNKDPLNDTAVALLKHSTDNSLMLDIWQDYQTQEEAAEAAKAGQTAGGKRGKSSSFATVSMIYRESLNNLMNMLYQTHPHFIRCIIPNEKKASGVIDSALVLNQLTCNGVLEGIRICRKGFPNRMLYPDFKHRYAILAADAAKESDPKKASVGILDKISVDGNLTDEEFKVGETKIFFKAGVLAKLEDLRDEILSRIVTMFQSRIRSYLAKAEVRRRYEQQTGLLVVQRNVRAWCTLRTWEWFKLFGKVKPMLKAGKEQEAMGELAVKIQKLEEAVQRGEIARSQLESQVADLVEEKNALFLSLETEKANLADAEERNEKLNQLKATLESKLSDITGQLEDMQERNEDLARQKKKTDQELSDTKKHVQDLELSLRKAEQEKQSRDHNIRSLQDEMANQDEAVAKLNKEKKHQEESNRKLNEDLQSEEDKVNHLEKIRNKLEQQMDELEENIDREKRSRGDIEKAKRKVEGDLKVAQENIDEITKQKHDVETTLKRKEEDLHHTNAKLAENNSIIAKLQRLIKELTARNAELEEELEAERNSRQKSDRSRSEAERELEELTERLEQQGGATAAQLEANKKREAEIAKLRREKEEDSLNHETAISSLRKRHGDSVAELTEQLETLQKLKAKSEAEKSKLQRDLEESQHATDSEVRSRQDLEKALKTIEVQYSELQTKADEQSRQLQDFAALKNRLNNENSDLNRSLEEMDNQLNSLHRLKSTLQSQLDETRRNYDEESRERQALAATAKNLEHENTILREHLDEEAESKADLTRQISKLNAEIQQWKARFDSEGLNKLEEIEAAKKALQLKVQELTDTNEGLFAKIASQEKVRFKLMQDLDDAQSDVEKAAAQVAFYEKHRRQFESIIAEWKKKTDDLSSELDAAQRDNRQLSTDLFKAKTANDELAEYLDSTRRENKSLAQEVKDLTDQLGEGGRSVAELQKIVRKLEVEKEELQKALDEAEAALEAEEAKVLRAQIEVSQIRSEIEKRIQEKEEEFENTRRNHQRALESMQATLEAETKQKEEALRIKKKLESDINDLEIALDHANRAYADAQKTIKKYMETVQELQFQIEEEQRQKDEIREQFLASEKRNAILQSEKDELAQQAEAAERARRNAEAECIELREQNNDLNAHVSALTGQRRKLEGELLAAHAELEEIANELKNAVEQGQKASADAARLAEELRQEQEHSMHIERIRKGLELQIKEMQIRLDDAENAALKGGKKIIAQLEARIRAIEQELDGEQRRHQDTEKNWRKAERRVKEVEFQVVEEKKNEERLTELVDKLQCKLKIFKRQVEEAEEVAASNLNKYKVLTAQFEQAEERADIAENALSKMRNKIRASASMAPPDGFPMVPSASSALIRSSSNARFL.

The Myosin N-terminal SH3-like domain maps to 33-82; it reads DSKKNCWIPDPEDGFVAAEIQSTTGEQVTVVTVKGNQITVKKDQCQEMNP. One can recognise a Myosin motor domain in the interval 86-791; that stretch reads DKTEDMANLT…VLAKLEDLRD (706 aa). Lysine 130 carries the N6,N6,N6-trimethyllysine modification. 179–186 is an ATP binding site; that stretch reads GESGAGKT. 2 actin-binding regions span residues 667–689 and 770–784; these read LNNLMNMLYQTHPHFIRCIIPNE and KVGETKIFFKAGVLA. In terms of domain architecture, IQ spans 794-823; sequence LSRIVTMFQSRIRSYLAKAEVRRRYEQQTG. A coiled-coil region spans residues 857-1969; sequence KEQEAMGELA…IRSSSNARFL (1113 aa). Disordered stretches follow at residues 942–966, 1006–1029, 1131–1213, and 1234–1255; these read MQERNEDLARQKKKTDQELSDTKKH, NKEKKHQEESNRKLNEDLQSEEDK, LEEE…GDSV, and KSKLQRDLEESQHATDSEVRSR. 2 stretches are compositionally biased toward basic and acidic residues: residues 1137-1164 and 1176-1197; these read AERNSRQKSDRSRSEAERELEELTERLE and ANKKREAEIAKLRREKEEDSLN.

The protein belongs to the TRAFAC class myosin-kinesin ATPase superfamily. Myosin family. As to quaternary structure, muscle myosin is a hexameric protein that consists of 2 heavy chain subunits (MHC), 2 alkali light chain subunits (MLC) and 2 regulatory light chain subunits (MLC-2). As to expression, expressed in body wall muscles, neighboring vulval muscle cells and the contractile sheath covering the hermaphrodite gonad (myoepithelial sheath cells).

The protein localises to the cytoplasm. It is found in the myofibril. Its subcellular location is the sarcomere. It localises to the a band. Essential for muscle contraction. Involved in ovulation likely by regulating the contraction of gonadal myoepithelial sheath cells. This chain is Myosin-3 (myo-3), found in Caenorhabditis elegans.